We begin with the raw amino-acid sequence, 163 residues long: Nucleotide-binding protein HD_0358 (163 aa).

It belongs to the YajQ family.

Nucleotide-binding protein. In Haemophilus ducreyi (strain 35000HP / ATCC 700724), this protein is Nucleotide-binding protein HD_0358.